A 153-amino-acid polypeptide reads, in one-letter code: UPF0179 protein AF_2154 (153 aa).

This sequence belongs to the UPF0179 family.

This chain is UPF0179 protein AF_2154, found in Archaeoglobus fulgidus (strain ATCC 49558 / DSM 4304 / JCM 9628 / NBRC 100126 / VC-16).